A 124-amino-acid chain; its full sequence is Large ribosomal subunit protein bL12 (124 aa).

The protein belongs to the bacterial ribosomal protein bL12 family. As to quaternary structure, homodimer. Part of the ribosomal stalk of the 50S ribosomal subunit. Forms a multimeric L10(L12)X complex, where L10 forms an elongated spine to which 2 to 4 L12 dimers bind in a sequential fashion. Binds GTP-bound translation factors.

Functionally, forms part of the ribosomal stalk which helps the ribosome interact with GTP-bound translation factors. Is thus essential for accurate translation. The protein is Large ribosomal subunit protein bL12 of Burkholderia ambifaria (strain MC40-6).